The primary structure comprises 307 residues: tRNA dimethylallyltransferase (307 aa).

11-18 (GPTGSGKT) contacts ATP. Position 13–18 (13–18 (TGSGKT)) interacts with substrate. Positions 36 to 39 (DSVA) are interaction with substrate tRNA.

The protein belongs to the IPP transferase family. In terms of assembly, monomer. It depends on Mg(2+) as a cofactor.

It carries out the reaction adenosine(37) in tRNA + dimethylallyl diphosphate = N(6)-dimethylallyladenosine(37) in tRNA + diphosphate. In terms of biological role, catalyzes the transfer of a dimethylallyl group onto the adenine at position 37 in tRNAs that read codons beginning with uridine, leading to the formation of N6-(dimethylallyl)adenosine (i(6)A). This chain is tRNA dimethylallyltransferase, found in Koribacter versatilis (strain Ellin345).